Reading from the N-terminus, the 122-residue chain is NADH-quinone oxidoreductase subunit A (122 aa).

3 consecutive transmembrane segments (helical) span residues 10 to 30 (MIVLIFLLLGILLPVVALTLG), 66 to 86 (IFALLFVIFDVETLFLYPWAV), and 91 to 111 (LGLFALIEMLIFVVMLLVGLA).

Belongs to the complex I subunit 3 family. In terms of assembly, NDH-1 is composed of 14 different subunits. Subunits NuoA, H, J, K, L, M, N constitute the membrane sector of the complex.

It is found in the cell membrane. It catalyses the reaction a quinone + NADH + 5 H(+)(in) = a quinol + NAD(+) + 4 H(+)(out). Functionally, NDH-1 shuttles electrons from NADH, via FMN and iron-sulfur (Fe-S) centers, to quinones in the respiratory chain. The immediate electron acceptor for the enzyme in this species is believed to be a menaquinone. Couples the redox reaction to proton translocation (for every two electrons transferred, four hydrogen ions are translocated across the cytoplasmic membrane), and thus conserves the redox energy in a proton gradient. The protein is NADH-quinone oxidoreductase subunit A of Bacillus mycoides (strain KBAB4) (Bacillus weihenstephanensis).